The following is a 199-amino-acid chain: UPF0301 protein Daci_1578 (199 aa).

This sequence belongs to the UPF0301 (AlgH) family.

This is UPF0301 protein Daci_1578 from Delftia acidovorans (strain DSM 14801 / SPH-1).